We begin with the raw amino-acid sequence, 433 residues long: Indole diterpene prenyltransferase terF (433 aa).

The protein belongs to the tryptophan dimethylallyltransferase family.

The protein operates within secondary metabolite biosynthesis. Its function is as follows. Indole diterpene prenyltransferase; part of the gene cluster that mediates the biosynthesis of terpendoles, indole-diterpene (IDT) mycotoxins including terpendole I, terpendole K, terpendole C, as well as the kinesin Eg5 inhibitor terpendole E. Terpendoles biosynthesis begins with the synthesis of geranylgeranyl diphosphate (GGPP) by a yet unidentified GGPP synthase. Condensation of indole-3-glycerol phosphate with GGPP by the prenyltransferase terC then forms 3-geranylgeranylindole (3-GGI), followed by epoxidation and cyclization of this intermediate (by the FAD-dependent monooxygeanse terM and the terpene cyclase terB) to form paspaline. The cytochrome monooxygenase terQ then hydroxylates paspalline at C-11 to yield terpendole E. The cytochrome monooxygenase terP converts terpendole E to 13-desoxyterpendole I, and terQ converts 13-desoxyterpendole I into terpendole I. TerF and terK are required for conversion of terpendole I to terpendole C which is further converted to terpendole K. This is Indole diterpene prenyltransferase terF from Tolypocladium album (Soil fungus).